Consider the following 122-residue polypeptide: Large ribosomal subunit protein uL14 (122 aa).

This sequence belongs to the universal ribosomal protein uL14 family. As to quaternary structure, part of the 50S ribosomal subunit. Forms a cluster with proteins L3 and L19. In the 70S ribosome, L14 and L19 interact and together make contacts with the 16S rRNA in bridges B5 and B8.

In terms of biological role, binds to 23S rRNA. Forms part of two intersubunit bridges in the 70S ribosome. The sequence is that of Large ribosomal subunit protein uL14 from Moorella thermoacetica (strain ATCC 39073 / JCM 9320).